The following is a 343-amino-acid chain: Dihydroorotase (343 aa).

Zn(2+) contacts are provided by H14 and H16. Substrate is bound by residues 16 to 18 (HLR) and N42. Positions 97, 136, 170, and 242 each coordinate Zn(2+). Position 97 is an N6-carboxylysine (K97). Position 136 (H136) interacts with substrate. D242 is an active-site residue. Substrate contacts are provided by H246 and A258.

This sequence belongs to the metallo-dependent hydrolases superfamily. DHOase family. Class II DHOase subfamily. As to quaternary structure, homodimer. The cofactor is Zn(2+).

The enzyme catalyses (S)-dihydroorotate + H2O = N-carbamoyl-L-aspartate + H(+). It participates in pyrimidine metabolism; UMP biosynthesis via de novo pathway; (S)-dihydroorotate from bicarbonate: step 3/3. Catalyzes the reversible cyclization of carbamoyl aspartate to dihydroorotate. In Helicobacter hepaticus (strain ATCC 51449 / 3B1), this protein is Dihydroorotase.